Here is a 354-residue protein sequence, read N- to C-terminus: Protein RecA (354 aa).

67-74 (GPESSGKT) is an ATP binding site.

The protein belongs to the RecA family.

It localises to the cytoplasm. Can catalyze the hydrolysis of ATP in the presence of single-stranded DNA, the ATP-dependent uptake of single-stranded DNA by duplex DNA, and the ATP-dependent hybridization of homologous single-stranded DNAs. It interacts with LexA causing its activation and leading to its autocatalytic cleavage. The polypeptide is Protein RecA (Hamiltonella defensa subsp. Acyrthosiphon pisum (strain 5AT)).